Consider the following 96-residue polypeptide: Early E1A 11 kDa protein (96 aa).

Disordered regions lie at residues 1–29 (MNSRMRRWAATSRLLHEDPPATPPSQDQQ) and 72–96 (LAQGEEEEEEEDGAEDIEENGEESD). Residues 75–96 (GEEEEEEEDGAEDIEENGEESD) are compositionally biased toward acidic residues.

This Murine adenovirus A serotype 1 (MAdV-1) protein is Early E1A 11 kDa protein.